Consider the following 234-residue polypeptide: Ribulose-phosphate 3-epimerase (234 aa).

Ser7 contacts substrate. Residues His32, Asp34, and His65 each contribute to the a divalent metal cation site. The active-site Proton acceptor is Asp34. Substrate contacts are provided by residues His65, 139 to 142 (GFSG), 172 to 174 (DGG), and 194 to 195 (AS). Residue Asp172 participates in a divalent metal cation binding. Catalysis depends on Asp172, which acts as the Proton donor.

This sequence belongs to the ribulose-phosphate 3-epimerase family. It depends on a divalent metal cation as a cofactor.

The catalysed reaction is D-ribulose 5-phosphate = D-xylulose 5-phosphate. It functions in the pathway carbohydrate degradation. Functionally, catalyzes the reversible epimerization of D-ribulose 5-phosphate to D-xylulose 5-phosphate. This Methanocaldococcus jannaschii (strain ATCC 43067 / DSM 2661 / JAL-1 / JCM 10045 / NBRC 100440) (Methanococcus jannaschii) protein is Ribulose-phosphate 3-epimerase.